Here is a 476-residue protein sequence, read N- to C-terminus: Vitamin D-binding protein (476 aa).

The first 16 residues, 1–16, serve as a signal peptide directing secretion; it reads MKRVLVLLLALAFGHA. 3 Albumin domains span residues 17–208, 209–394, and 395–476; these read LERG…QMKH, LSLL…LLKR, and QLTS…TLQS. Cystine bridges form between Cys29-Cys75, Cys74-Cys83, Cys96-Cys112, Cys111-Cys122, Cys145-Cys190, Cys189-Cys198, Cys220-Cys266, Cys265-Cys273, Cys286-Cys300, Cys299-Cys311, Cys335-Cys376, Cys375-Cys384, Cys407-Cys453, and Cys452-Cys462. Asn288 carries an N-linked (GlcNAc...) asparagine glycan. Ser434 is modified (phosphoserine).

This sequence belongs to the ALB/AFP/VDB family. In terms of assembly, associates with membrane-bound immunoglobulin on the surface of B-lymphocytes and with IgG Fc receptor on the membranes of T-lymphocytes. Interacts with LRP2; the interaction is required for renal uptake of GC in complex with 25-hydroxyvitamin D3.

The protein resides in the secreted. Functionally, involved in vitamin D transport and storage, scavenging of extracellular G-actin, enhancement of the chemotactic activity of C5 alpha for neutrophils in inflammation and macrophage activation. This is Vitamin D-binding protein (Gc) from Mus musculus (Mouse).